We begin with the raw amino-acid sequence, 260 residues long: Hydroxyethylthiazole kinase 1 (260 aa).

Methionine 39 is a binding site for substrate. ATP is bound by residues arginine 115 and threonine 160. A substrate-binding site is contributed by glycine 187.

This sequence belongs to the Thz kinase family. The cofactor is Mg(2+).

It catalyses the reaction 5-(2-hydroxyethyl)-4-methylthiazole + ATP = 4-methyl-5-(2-phosphooxyethyl)-thiazole + ADP + H(+). It functions in the pathway cofactor biosynthesis; thiamine diphosphate biosynthesis; 4-methyl-5-(2-phosphoethyl)-thiazole from 5-(2-hydroxyethyl)-4-methylthiazole: step 1/1. Catalyzes the phosphorylation of the hydroxyl group of 4-methyl-5-beta-hydroxyethylthiazole (THZ). This chain is Hydroxyethylthiazole kinase 1, found in Streptococcus pneumoniae (strain 70585).